The following is a 227-amino-acid chain: MGNCVGRQRRERPTAPGHPRKRAGRNEPLKKERLKWKSDYPMTDGQLRSKRDEFWDTAPAFEGRKEIWDALKAAAYAAEANDHELAQAILDGASITLPHGTLCECYDELGNRYQLPIYCLSPPVNLLLEHTEEESLEPPEPTPSVRREFPLKVRLSTGKDVRLSASLPDTVGQLKRQLHTQEGIEPSWQRWFFSGKLLTDRTRLQETKIQKDFVIQVIINQPPPPQD.

The interval Met-1 to Trp-36 is disordered. Positions Gly-24 to Trp-36 are enriched in basic and acidic residues. Residues Phe-149 to Pro-224 form the Ubiquitin-like domain.

As to quaternary structure, interacts with UBTD1.

May be involved in the regulation of cellular senescence through a positive feedback loop with TP53. Is a TP53 downstream target gene that increases the stability of TP53 protein by promoting the ubiquitination and degradation of MDM2. The sequence is that of Ubiquitin domain-containing protein 1 (UBTD1) from Bos taurus (Bovine).